Reading from the N-terminus, the 96-residue chain is Nucleoid-associated protein TC_0612 (96 aa).

This sequence belongs to the YbaB/EbfC family. In terms of assembly, homodimer.

It is found in the cytoplasm. The protein localises to the nucleoid. Its function is as follows. Binds to DNA and alters its conformation. May be involved in regulation of gene expression, nucleoid organization and DNA protection. The polypeptide is Nucleoid-associated protein TC_0612 (Chlamydia muridarum (strain MoPn / Nigg)).